The following is a 367-amino-acid chain: EGGSTAGLSATPPASLPGSLTNVKALQKSPGPQRERKSSSSSEDRNRMKTLGRRDSSDDWEIPDGQITVGQRIGSGSFGTVYKGKWHGDVAVKMLNVTAPTPQQLQAFKNEVGVLRKTRHVNILLFMGYSTKPQLAIVTQWCEGSSLYHHLHIIETKFEMIKLIDIARQTAQGMDYLHAKSIIHRDLKSNNIFLHEDLTVKIGDFGLATVKSRWSGSHQFEQLSGSILWMAPEVIRMQDKNPYSFQSDVYAFGIVLYELMTGQLPYSNINNRDQIIFMVGRGYLSPDLSKVRSNCPKAMKRLMAECLKKKRDERPLFPQILASIELLARSLPKIHRSASEPSLNRAGFQTEDFSLYACASPKTPIQA.

The tract at residues 1 to 64 is disordered; the sequence is EGGSTAGLSA…DSSDDWEIPD (64 aa). Residues 33-57 are compositionally biased toward basic and acidic residues; the sequence is QRERKSSSSSEDRNRMKTLGRRDSS. The Protein kinase domain occupies 67 to 327; the sequence is ITVGQRIGSG…PQILASIELL (261 aa). ATP is bound by residues 73-81 and K93; that span reads IGSGSFGTV. The active-site Proton acceptor is the D186.

Belongs to the protein kinase superfamily. TKL Ser/Thr protein kinase family. RAF subfamily.

The enzyme catalyses L-seryl-[protein] + ATP = O-phospho-L-seryl-[protein] + ADP + H(+). The catalysed reaction is L-threonyl-[protein] + ATP = O-phospho-L-threonyl-[protein] + ADP + H(+). The polypeptide is Serine/threonine-protein kinase-transforming protein Rmil (V-RMIL) (Avian retrovirus IC10).